The chain runs to 84 residues: Cell division topological specificity factor (84 aa).

Belongs to the MinE family.

In terms of biological role, prevents the cell division inhibition by proteins MinC and MinD at internal division sites while permitting inhibition at polar sites. This ensures cell division at the proper site by restricting the formation of a division septum at the midpoint of the long axis of the cell. The chain is Cell division topological specificity factor from Azotobacter vinelandii (strain DJ / ATCC BAA-1303).